The sequence spans 261 residues: Triosephosphate isomerase (261 aa).

10 to 12 (NWK) serves as a coordination point for substrate. The active-site Electrophile is the histidine 100. Glutamate 172 functions as the Proton acceptor in the catalytic mechanism. Residues glycine 178, serine 218, and 239-240 (GG) contribute to the substrate site.

This sequence belongs to the triosephosphate isomerase family. In terms of assembly, homodimer.

It localises to the cytoplasm. The enzyme catalyses D-glyceraldehyde 3-phosphate = dihydroxyacetone phosphate. Its pathway is carbohydrate biosynthesis; gluconeogenesis. It participates in carbohydrate degradation; glycolysis; D-glyceraldehyde 3-phosphate from glycerone phosphate: step 1/1. Functionally, involved in the gluconeogenesis. Catalyzes stereospecifically the conversion of dihydroxyacetone phosphate (DHAP) to D-glyceraldehyde-3-phosphate (G3P). The polypeptide is Triosephosphate isomerase (Mycobacterium avium (strain 104)).